Reading from the N-terminus, the 314-residue chain is Porphobilinogen deaminase (314 aa).

C242 is modified (S-(dipyrrolylmethanemethyl)cysteine).

This sequence belongs to the HMBS family. Monomer. It depends on dipyrromethane as a cofactor.

It carries out the reaction 4 porphobilinogen + H2O = hydroxymethylbilane + 4 NH4(+). It functions in the pathway porphyrin-containing compound metabolism; protoporphyrin-IX biosynthesis; coproporphyrinogen-III from 5-aminolevulinate: step 2/4. Functionally, tetrapolymerization of the monopyrrole PBG into the hydroxymethylbilane pre-uroporphyrinogen in several discrete steps. The protein is Porphobilinogen deaminase (hemC) of Bacillus subtilis (strain 168).